The following is a 684-amino-acid chain: Probable phosphoenolpyruvate synthase (684 aa).

Histidine 424 acts as the Tele-phosphohistidine intermediate in catalysis. The substrate site is built by arginine 517, arginine 564, and glutamate 661. Glutamate 661 lines the Mg(2+) pocket.

This sequence belongs to the PEP-utilizing enzyme family. Mg(2+) serves as cofactor.

The enzyme catalyses pyruvate + ATP + H2O = phosphoenolpyruvate + AMP + phosphate + 2 H(+). It functions in the pathway carbohydrate biosynthesis; gluconeogenesis. Functionally, catalyzes the phosphorylation of pyruvate to phosphoenolpyruvate. In Methanothermobacter thermautotrophicus (strain ATCC 29096 / DSM 1053 / JCM 10044 / NBRC 100330 / Delta H) (Methanobacterium thermoautotrophicum), this protein is Probable phosphoenolpyruvate synthase (ppsA).